The following is a 180-amino-acid chain: Fucolectin-3 (180 aa).

An N-terminal signal peptide occupies residues 1–22 (MEVKMIILLFQILAISTLKSDS). The tract at residues 31–179 (QENVALRGRA…VEVNVLFPAP (149 aa)) is F5/8 type C-like. The Ca(2+) site is built by N58, D61, N63, and S72. Cystine bridges form between C73-C168, C104-C105, and C130-C146. H75 and R101 together coordinate alpha-L-fucose. The Cell attachment site signature appears at 101–103 (RGD). An alpha-L-fucose-binding site is contributed by R108. Ca(2+) contacts are provided by C168 and E169.

The protein belongs to the fucolectin family. As to quaternary structure, homotrimer. As to expression, parenchymal hepatocytes.

The protein localises to the secreted. It is found in the extracellular space. Acts as a defensive agent. Recognizes blood group fucosylated oligosaccharides including A, B, H and Lewis B-type antigens. Does not recognize Lewis A antigen and has low affinity for monovalent haptens. In Anguilla japonica (Japanese eel), this protein is Fucolectin-3.